Reading from the N-terminus, the 277-residue chain is Large ribosomal subunit protein uL2 (277 aa).

The disordered stretch occupies residues 219–277; it reads RPQTRGSAMNPVDHPHGGGEGKKNSGRHPVTPWGKPTKGAKTRRKKASDKLIISRRKGK. Basic and acidic residues predominate over residues 231–241; the sequence is DHPHGGGEGKK. The segment covering 256–277 has biased composition (basic residues); that stretch reads KGAKTRRKKASDKLIISRRKGK.

It belongs to the universal ribosomal protein uL2 family. In terms of assembly, part of the 50S ribosomal subunit. Forms a bridge to the 30S subunit in the 70S ribosome.

Its function is as follows. One of the primary rRNA binding proteins. Required for association of the 30S and 50S subunits to form the 70S ribosome, for tRNA binding and peptide bond formation. It has been suggested to have peptidyltransferase activity; this is somewhat controversial. Makes several contacts with the 16S rRNA in the 70S ribosome. This Campylobacter concisus (strain 13826) protein is Large ribosomal subunit protein uL2.